Reading from the N-terminus, the 436-residue chain is GTPase Der (436 aa).

EngA-type G domains are found at residues 4-167 and 176-351; these read PIVA…GEEE and IRLS…ENHK. GTP is bound by residues 10 to 17, 57 to 61, 119 to 122, 182 to 189, 229 to 233, and 294 to 297; these read GRPNVGKS, DTGGI, NKVD, DTAGM, and NKWD. The 85-residue stretch at 352-436 folds into the KH-like domain; that stretch reads KRVQSSTLNE…PIHIIARKRN (85 aa).

The protein belongs to the TRAFAC class TrmE-Era-EngA-EngB-Septin-like GTPase superfamily. EngA (Der) GTPase family. As to quaternary structure, associates with the 50S ribosomal subunit.

In terms of biological role, GTPase that plays an essential role in the late steps of ribosome biogenesis. The polypeptide is GTPase Der (Staphylococcus aureus (strain USA300)).